The following is a 491-amino-acid chain: UDP-N-acetylmuramate--L-alanine ligase (491 aa).

Glycine 126 to threonine 132 contributes to the ATP binding site.

Belongs to the MurCDEF family.

It localises to the cytoplasm. It catalyses the reaction UDP-N-acetyl-alpha-D-muramate + L-alanine + ATP = UDP-N-acetyl-alpha-D-muramoyl-L-alanine + ADP + phosphate + H(+). It participates in cell wall biogenesis; peptidoglycan biosynthesis. Functionally, cell wall formation. This chain is UDP-N-acetylmuramate--L-alanine ligase, found in Klebsiella pneumoniae subsp. pneumoniae (strain ATCC 700721 / MGH 78578).